A 303-amino-acid chain; its full sequence is Aspartate carbamoyltransferase catalytic subunit (303 aa).

Residues Arg49 and Thr50 each contribute to the carbamoyl phosphate site. Lys77 lines the L-aspartate pocket. Carbamoyl phosphate contacts are provided by Arg99, His126, and Gln129. L-aspartate contacts are provided by Arg159 and Arg211. The carbamoyl phosphate site is built by Ser252 and Pro253.

This sequence belongs to the aspartate/ornithine carbamoyltransferase superfamily. ATCase family. Heterododecamer (2C3:3R2) of six catalytic PyrB chains organized as two trimers (C3), and six regulatory PyrI chains organized as three dimers (R2).

The catalysed reaction is carbamoyl phosphate + L-aspartate = N-carbamoyl-L-aspartate + phosphate + H(+). The protein operates within pyrimidine metabolism; UMP biosynthesis via de novo pathway; (S)-dihydroorotate from bicarbonate: step 2/3. In terms of biological role, catalyzes the condensation of carbamoyl phosphate and aspartate to form carbamoyl aspartate and inorganic phosphate, the committed step in the de novo pyrimidine nucleotide biosynthesis pathway. This chain is Aspartate carbamoyltransferase catalytic subunit, found in Listeria monocytogenes serovar 1/2a (strain ATCC BAA-679 / EGD-e).